The following is a 127-amino-acid chain: Peroxiredoxin-2 (127 aa).

A Thioredoxin domain is found at Leu1–Tyr125. Cys12 acts as the Cysteine sulfenic acid (-SOH) intermediate in catalysis. Residue Ser73 is modified to Phosphoserine.

This sequence belongs to the peroxiredoxin family. AhpC/Prx1 subfamily. As to quaternary structure, homodimer; disulfide-linked, upon oxidation. 5 homodimers assemble to form a ring-like decamer. Interacts with TIPIN. Post-translationally, the enzyme can be inactivated by further oxidation of the cysteine sulfenic acid (C(P)-SOH) to sulphinic acid (C(P)-SO2H) instead of its condensation to a disulfide bond. It can be reactivated by forming a transient disulfide bond with sulfiredoxin SRXN1, which reduces the cysteine sulfinic acid in an ATP- and Mg-dependent manner. Acetylation increases resistance to transition to high molecular-mass complexes. Deacetylated by HDAC6 which decreases reducing activity.

The protein localises to the cytoplasm. The enzyme catalyses a hydroperoxide + [thioredoxin]-dithiol = an alcohol + [thioredoxin]-disulfide + H2O. Functionally, thiol-specific peroxidase that catalyzes the reduction of hydrogen peroxide and organic hydroperoxides to water and alcohols, respectively. Plays a role in cell protection against oxidative stress by detoxifying peroxides and as sensor of hydrogen peroxide-mediated signaling events. Might participate in the signaling cascades of growth factors and tumor necrosis factor-alpha by regulating the intracellular concentrations of H(2)O(2). This chain is Peroxiredoxin-2 (PRDX2), found in Sus scrofa (Pig).